A 119-amino-acid chain; its full sequence is Small ribosomal subunit protein bS6 (119 aa).

Residues A95–E119 are disordered. A compositionally biased stretch (basic and acidic residues) spans G105–E119.

The protein belongs to the bacterial ribosomal protein bS6 family.

In terms of biological role, binds together with bS18 to 16S ribosomal RNA. This chain is Small ribosomal subunit protein bS6, found in Halorhodospira halophila (strain DSM 244 / SL1) (Ectothiorhodospira halophila (strain DSM 244 / SL1)).